The following is a 690-amino-acid chain: Elongation factor G (690 aa).

The region spanning Ser8–Ser283 is the tr-type G domain. Residues Ala17–Thr24, Asp81–His85, and Asn135–Asp138 contribute to the GTP site.

The protein belongs to the TRAFAC class translation factor GTPase superfamily. Classic translation factor GTPase family. EF-G/EF-2 subfamily.

Its subcellular location is the cytoplasm. Its function is as follows. Catalyzes the GTP-dependent ribosomal translocation step during translation elongation. During this step, the ribosome changes from the pre-translocational (PRE) to the post-translocational (POST) state as the newly formed A-site-bound peptidyl-tRNA and P-site-bound deacylated tRNA move to the P and E sites, respectively. Catalyzes the coordinated movement of the two tRNA molecules, the mRNA and conformational changes in the ribosome. This is Elongation factor G from Anaplasma marginale (strain Florida).